A 167-amino-acid polypeptide reads, in one-letter code: MSYTSYILAFQLCLILGSYGCYCQDTLTRETEHLKAYLKANTSDVANGGPLFLNILRNWKEESDNKIIQSQIVSFYFKLFDNLKDHEVIKKSMESIKEDIFVKFFNSNLTKMDDFQNLTRISVDDRLVQRKAVSELSNVLNFLSPKSNLKKRKRSQTLFRGRRASKY.

The signal sequence occupies residues 1–23; sequence MSYTSYILAFQLCLILGSYGCYC. Residue Q24 is modified to Pyrrolidone carboxylic acid. N41, N108, and N117 each carry an N-linked (GlcNAc...) asparagine glycan.

This sequence belongs to the type II (or gamma) interferon family. In terms of assembly, homodimer. Interacts with IFNGR1 (via extracellular domain); this interaction promotes IFNGR1 dimerization. As to expression, released primarily from activated T lymphocytes.

It localises to the secreted. In terms of biological role, type II interferon produced by immune cells such as T-cells and NK cells that plays crucial roles in antimicrobial, antiviral, and antitumor responses by activating effector immune cells and enhancing antigen presentation. Primarily signals through the JAK-STAT pathway after interaction with its receptor IFNGR1 to affect gene regulation. Upon IFNG binding, IFNGR1 intracellular domain opens out to allow association of downstream signaling components JAK2, JAK1 and STAT1, leading to STAT1 activation, nuclear translocation and transcription of IFNG-regulated genes. Many of the induced genes are transcription factors such as IRF1 that are able to further drive regulation of a next wave of transcription. Plays a role in class I antigen presentation pathway by inducing a replacement of catalytic proteasome subunits with immunoproteasome subunits. In turn, increases the quantity, quality, and repertoire of peptides for class I MHC loading. Increases the efficiency of peptide generation also by inducing the expression of activator PA28 that associates with the proteasome and alters its proteolytic cleavage preference. Up-regulates as well MHC II complexes on the cell surface by promoting expression of several key molecules such as cathepsins B/CTSB, H/CTSH, and L/CTSL. Participates in the regulation of hematopoietic stem cells during development and under homeostatic conditions by affecting their development, quiescence, and differentiation. This is Interferon gamma (IFNG) from Oryctolagus cuniculus (Rabbit).